The following is a 991-amino-acid chain: Envelope glycoprotein gp160 (991 aa).

The first 106 residues, 1–106, serve as a signal peptide directing secretion; it reads MTSKESKPSR…CLMWEMRKGN (106 aa). Residues 107 to 840 are Extracellular-facing; it reads QCQAEEVIAL…WSSWFSWLKY (734 aa). N-linked (GlcNAc...) asparagine; by host glycans are attached at residues Asn140, Asn161, Asn206, Asn258, Asn298, Asn364, Asn381, Asn387, Asn403, Asn435, Asn439, Asn470, Asn475, Asn481, Asn491, Asn501, Asn515, Asn527, Asn537, Asn542, Asn543, and Asn568. Residues 665-685 are fusion peptide; the sequence is GIGLVIVLAIMAIIAAAGAGL. Residues 697–747 are a coiled coil; sequence RTAVQSLANATAAQQEVLEASYAMVQHIAKGIRILEARVARVEALVDRMMV. Asn705 is a glycosylation site (N-linked (GlcNAc...) asparagine; by host). Positions 731-747 are immunosuppression; sequence LEARVARVEALVDRMMV. N-linked (GlcNAc...) asparagine; by host glycosylation is found at Asn773, Asn780, Asn796, and Asn830. Positions 788–823 form a coiled coil; it reads EEIEQHEGNLSLLLREAALQVHIAQRDARRIPDAWK. The chain crosses the membrane as a helical span at residues 841–861; that stretch reads VPWIIMGIVGLICFRILMCVI. Over 862-991 the chain is Cytoplasmic; sequence SMCLQAYKQV…PTLENDYVEL (130 aa). A lipid anchor (S-palmitoyl cysteine; by host) is attached at Cys864.

The mature envelope protein (Env) consists of a trimer of SU-TM heterodimers attached by noncovalent interactions or by a labile interchain disulfide bond. Post-translationally, specific enzymatic cleavages in vivo yield mature proteins. Envelope glycoproteins are synthesized as an inactive precursor that is N-glycosylated and processed likely by host cell furin or by a furin-like protease in the Golgi to yield the mature SU and TM proteins. The cleavage site between SU and TM requires the minimal sequence [KR]-X-[KR]-R. In terms of processing, the transmembrane protein is palmitoylated.

The protein localises to the virion membrane. It localises to the host cell membrane. The surface protein (SU) attaches the virus to the host cell by binding to its receptor. This interaction triggers the refolding of the transmembrane protein (TM) and is thought to activate its fusogenic potential by unmasking its fusion peptide. Fusion occurs at the host cell plasma membrane. In terms of biological role, the transmembrane protein (TM) acts as a class I viral fusion protein. Under the current model, the protein has at least 3 conformational states: pre-fusion native state, pre-hairpin intermediate state, and post-fusion hairpin state. During viral and target cell membrane fusion, the coiled coil regions (heptad repeats) assume a trimer-of-hairpins structure, positioning the fusion peptide in close proximity to the C-terminal region of the ectodomain. The formation of this structure appears to drive apposition and subsequent fusion of viral and target cell membranes. Membranes fusion leads to delivery of the nucleocapsid into the cytoplasm. In Ovis aries (Sheep), this protein is Envelope glycoprotein gp160 (env).